The following is a 320-amino-acid chain: ATP synthase gamma chain (320 aa).

It belongs to the ATPase gamma chain family. As to quaternary structure, F-type ATPases have 2 components, CF(1) - the catalytic core - and CF(0) - the membrane proton channel. CF(1) has five subunits: alpha(3), beta(3), gamma(1), delta(1), epsilon(1). CF(0) has three main subunits: a, b and c.

It localises to the cell membrane. In terms of biological role, produces ATP from ADP in the presence of a proton gradient across the membrane. The gamma chain is believed to be important in regulating ATPase activity and the flow of protons through the CF(0) complex. In Lactobacillus delbrueckii subsp. bulgaricus (strain ATCC 11842 / DSM 20081 / BCRC 10696 / JCM 1002 / NBRC 13953 / NCIMB 11778 / NCTC 12712 / WDCM 00102 / Lb 14), this protein is ATP synthase gamma chain.